A 74-amino-acid chain; its full sequence is UPF0352 protein PM1884 (74 aa).

The protein belongs to the UPF0352 family.

The polypeptide is UPF0352 protein PM1884 (Pasteurella multocida (strain Pm70)).